The chain runs to 83 residues: MANIKSAIKRVKTTEKAEARNISQKSAMRTAVKNAKTAVSNNADNKNELVSLAVKLVDKAAQSNLIHSNKADRIKSQLMTANK.

This sequence belongs to the bacterial ribosomal protein bS20 family.

Functionally, binds directly to 16S ribosomal RNA. The polypeptide is Small ribosomal subunit protein bS20 (Staphylococcus aureus (strain JH1)).